Consider the following 225-residue polypeptide: Putative ankyrin repeat protein RBE_1025 (225 aa).

ANK repeat units follow at residues 6–35, 41–71, 75–120, and 124–153; these read LSKD…AINP, NGKT…NVNI, TGFT…DVNI, and KGNT…SPFI.

The protein is Putative ankyrin repeat protein RBE_1025 of Rickettsia bellii (strain RML369-C).